A 362-amino-acid polypeptide reads, in one-letter code: Serine/threonine-protein kinase SRK2E (362 aa).

Serine 7, serine 18, serine 29, and serine 43 each carry phosphoserine; by autocatalysis. Positions 21–277 constitute a Protein kinase domain; that stretch reads YELVKDIGSG…IPEIRNHEWF (257 aa). 27–35 contributes to the ATP binding site; sequence IGSGNFGVA. Position 50 (lysine 50) interacts with ATP. Aspartate 140 (proton acceptor) is an active-site residue. The tract at residues 160–186 is activation loop; that stretch reads DFGYSKSSVLHSQPKSTVGTPAYIAPE. Position 175 is a phosphoserine (serine 175). Residues 283–318 are domain I; osmotic stress response, required for the kinase activity; sequence ADLMNDNTMTTQFDESDQPGQSIEEIMQIIAEATVP. Residues 319–362 are domain II; ABA response and ABI1 binding; it reads PAGTQNLNHYLTGSLDIDDDMEEDLESDLDDLDIDSSGEIVYAM.

Belongs to the protein kinase superfamily. Ser/Thr protein kinase family. As to quaternary structure, interacts with ABI1, PP2CA and SLAC1. Interacts with B'ALPHA, B'BETA, B'DELTA, PP2AA2, PP2AA3, PP2A1 and PP2A2. Associates with MAPKKK18 within the nucleus. Interacts with I-2, TOPP1 and TOPP2. Interacts with ABI2. In terms of processing, autophosphorylation on residues Ser-7, Ser-18, Ser-29, Ser-43, Ser-175 and/or Thr-176. Only the phosphorylation of Ser-175 is crucial for the kinase activity. The phosphorylation of Ser-43 may repress the ABA signaling pathway in absence of ABA. In terms of tissue distribution, expressed in seedlings, leaves, flowers, stems, and roots, but restricted to guard cells and vascular tissue.

It is found in the nucleus. It catalyses the reaction L-seryl-[protein] + ATP = O-phospho-L-seryl-[protein] + ADP + H(+). The catalysed reaction is L-threonyl-[protein] + ATP = O-phospho-L-threonyl-[protein] + ADP + H(+). With respect to regulation, kinase activity enhanced by ABA and low humidity. Repressed by PP2CA independently of its phosphatase activity. Probably inactivated by ABI1. Repressed by TOPP1. Negatively regulated by ABI2. Its function is as follows. Activator of the abscisic acid (ABA) signaling pathway that regulates numerous ABA responses, such as stomata closure in response to drought, darkness, high CO(2), plant pathogens, or decreases in atmospheric relative humidity (RH). Involved in the resistance to drought by avoiding water loss. Required for the stomata closure mediated by pathogen-associated molecular pattern (PAMPs) (e.g. flg22 and LPS) of pathogenic bacteria such as P.syringae pv. tomato (Pst) and E.coli O157:H7. As a plant defense process, stomata are closed transiently in order to limit invaders, but actively reopened by bacteria after a few hours; virulent strains (e.g. Pst DC3000) are more efficient than avirulent strains (e.g. Pst DC3000 AvrRpt2) in reopening stomata. Mediates the phosphorylation and activation of the S-type anion efflux channel SLAC1, and thus promotes stomata closure. Essential for stomatal closure in response to reactive oxygen species (ROS). Promotes MAPKKK18 activity upon abscisic acid (ABA) treatment. The protein is Serine/threonine-protein kinase SRK2E of Arabidopsis thaliana (Mouse-ear cress).